The following is a 425-amino-acid chain: Glutamate-1-semialdehyde 2,1-aminomutase (425 aa).

Lys265 is modified (N6-(pyridoxal phosphate)lysine).

It belongs to the class-III pyridoxal-phosphate-dependent aminotransferase family. HemL subfamily. As to quaternary structure, homodimer. Pyridoxal 5'-phosphate is required as a cofactor.

The protein localises to the cytoplasm. It carries out the reaction (S)-4-amino-5-oxopentanoate = 5-aminolevulinate. It functions in the pathway porphyrin-containing compound metabolism; protoporphyrin-IX biosynthesis; 5-aminolevulinate from L-glutamyl-tRNA(Glu): step 2/2. This chain is Glutamate-1-semialdehyde 2,1-aminomutase, found in Nitrosospira multiformis (strain ATCC 25196 / NCIMB 11849 / C 71).